The following is a 330-amino-acid chain: Mas-related G-protein coupled receptor member X2 (330 aa).

Residues M1–P33 are Extracellular-facing. A helical membrane pass occupies residues V34–L54. The Cytoplasmic portion of the chain corresponds to L55–A63. Residues F64–I84 form a helical membrane-spanning segment. At N85–S96 the chain is on the extracellular side. Residues I97 to L117 form a helical membrane-spanning segment. Residues S118 to H144 are Cytoplasmic-facing. A helical transmembrane segment spans residues L145–G165. The Extracellular portion of the chain corresponds to K166–D184. The helical transmembrane segment at F185–L205 threads the bilayer. Residues L206–T228 lie on the Cytoplasmic side of the membrane. Residues V229–I249 form a helical membrane-spanning segment. Topologically, residues W250 to S264 are extracellular. The chain crosses the membrane as a helical span at residues V265 to F285. Residues R286 to V330 lie on the Cytoplasmic side of the membrane.

Belongs to the G-protein coupled receptor 1 family. Mas subfamily.

The protein resides in the cell membrane. In terms of biological role, mast cell-specific receptor for basic secretagogues, i.e. cationic amphiphilic drugs, as well as endo- or exogenous peptides, consisting of a basic head group and a hydrophobic core. Recognizes and binds small molecules containing a cyclized tetrahydroisoquinoline (THIQ), such as non-steroidal neuromuscular blocking drugs (NMBDs), including tubocurarine and atracurium. In response to these compounds, mediates pseudo-allergic reactions characterized by histamine release, inflammation and airway contraction. The sequence is that of Mas-related G-protein coupled receptor member X2 (MRGPRX2) from Pongo pygmaeus (Bornean orangutan).